Reading from the N-terminus, the 201-residue chain is MLNQLRPALVLLVALTAVTGLAYPLAVTGIAGALFPAKAAGSLIERDGRIIGSSLIGQSFTGEGYFHGRPSATNAADPADASKTVPAPYNAASSAGSNLGPTSAALAERVKGDLAALKAENPGRPVPVDLVTTSGSGLDPDISPEAALFQVPRIARARNLPEARLRDLVAGQVQGRTLGLLGEPRVNVLALNLVLDDLAKR.

Residues 10 to 30 (VLLVALTAVTGLAYPLAVTGI) traverse the membrane as a helical segment.

This sequence belongs to the KdpC family. The system is composed of three essential subunits: KdpA, KdpB and KdpC.

The protein resides in the cell inner membrane. Functionally, part of the high-affinity ATP-driven potassium transport (or Kdp) system, which catalyzes the hydrolysis of ATP coupled with the electrogenic transport of potassium into the cytoplasm. This subunit acts as a catalytic chaperone that increases the ATP-binding affinity of the ATP-hydrolyzing subunit KdpB by the formation of a transient KdpB/KdpC/ATP ternary complex. This Methylorubrum extorquens (strain PA1) (Methylobacterium extorquens) protein is Potassium-transporting ATPase KdpC subunit.